The sequence spans 827 residues: Probable beta-glucosidase H (827 aa).

Residue D223 is part of the active site. The region spanning 387–546 (RLLTNAVMHF…DSAEMVRSAV (160 aa)) is the PA14 domain. Residues N471, N594, N600, and N625 are each glycosylated (N-linked (GlcNAc...) asparagine).

Belongs to the glycosyl hydrolase 3 family.

The protein localises to the secreted. The catalysed reaction is Hydrolysis of terminal, non-reducing beta-D-glucosyl residues with release of beta-D-glucose.. The protein operates within glycan metabolism; cellulose degradation. Beta-glucosidases are one of a number of cellulolytic enzymes involved in the degradation of cellulosic biomass. Catalyzes the last step releasing glucose from the inhibitory cellobiose. This is Probable beta-glucosidase H (bglH) from Aspergillus flavus (strain ATCC 200026 / FGSC A1120 / IAM 13836 / NRRL 3357 / JCM 12722 / SRRC 167).